A 201-amino-acid chain; its full sequence is Recombination protein RecR (201 aa).

The C4-type zinc-finger motif lies at 57 to 72; sequence CADCRTFTEQDVCNIC. The 96-residue stretch at 81–176 folds into the Toprim domain; the sequence is GQICVVESPA…SASRIAHGVP (96 aa).

The protein belongs to the RecR family.

In terms of biological role, may play a role in DNA repair. It seems to be involved in an RecBC-independent recombinational process of DNA repair. It may act with RecF and RecO. This is Recombination protein RecR from Enterobacter sp. (strain 638).